A 66-amino-acid polypeptide reads, in one-letter code: MLCLPVFIILLLLASPAASNPLEKRIQSDLIRAALEDADTKNDPRLLDYVTGACCAGLNFVCCGKK.

Positions 1 to 19 are cleaved as a signal peptide; it reads MLCLPVFIILLLLASPAAS. A propeptide spanning residues 20-45 is cleaved from the precursor; that stretch reads NPLEKRIQSDLIRAALEDADTKNDPR. Cysteine amide is present on C63.

Belongs to the conotoxin T superfamily. In terms of processing, contains 2 disulfide bonds that can be either 'C1-C3, C2-C4' or 'C1-C4, C2-C3', since these disulfide connectivities have been observed for conotoxins with cysteine framework V (for examples, see AC P0DQQ7 and AC P81755). Expressed by the venom duct.

It localises to the secreted. The chain is Conotoxin PnMLCL-01 from Conus pennaceus (Feathered cone).